The following is a 345-amino-acid chain: uncharacterized protein (345 aa).

The protein localises to the cell membrane. In terms of biological role, involved in potassium and divalent cation transport. Enhances the transport activity of the cation/potassium transporter CzcD. This is an uncharacterized protein from Bacillus velezensis (strain DSM 23117 / BGSC 10A6 / LMG 26770 / FZB42) (Bacillus amyloliquefaciens subsp. plantarum).